The chain runs to 133 residues: uncharacterized protein (133 aa).

This is an uncharacterized protein from Saccharomyces cerevisiae (strain ATCC 204508 / S288c) (Baker's yeast).